Consider the following 163-residue polypeptide: Epithelial membrane protein 3 (163 aa).

The helical transmembrane segment at 4 to 24 threads the bilayer; it reads LLLVVSALHILILVLLFVATL. N-linked (GlcNAc...) asparagine glycosylation is found at asparagine 46 and asparagine 56. Helical transmembrane passes span 66 to 86, 100 to 120, and 139 to 159; these read VQAL…LFMF, TGLC…IYAI, and FALA…YIHL.

Belongs to the PMP-22/EMP/MP20 family.

The protein localises to the membrane. Its function is as follows. Probably involved in cell proliferation and cell-cell interactions. In Mus musculus (Mouse), this protein is Epithelial membrane protein 3 (Emp3).